Here is a 396-residue protein sequence, read N- to C-terminus: MLDAQTIATVKATIPLLVETGPKLTAHFYDRMFTHNPELKEIFNMSNQRNGDQREALFNAIAAYASNIENLPALLPAVEKIAQKHTSFQIKPEQYNIVGEHLLATLDEMFSPGQEVLDAWGKAYGVLANVFINREAEIYNENASKAGGWEGTRDFRIVAKTPRSALITSFELEPVDGGAVAEYRPGQYLGVWLKPEGFPHQEIRQYSLTRKPDGKGYRIAVKREEGGQVSNWLHNHANVGDVVKLVAPAGDFFMAVADDTPVTLISAGVGQTPMLAMLDTLAKAGHTAQVNWFHAAENGDVHAFADEVKELGQSLPRFTAHTWYRQPSEADRAKGQFDSEGLMDLSKLEGAFSDPTMQFYLCGPVGFMQFTAKQLVDLGVKQENIHYECFGPHKVL.

The Globin domain maps to 1-136; it reads MLDAQTIATV…LANVFINREA (136 aa). His85 provides a ligand contact to heme b. Residues Tyr95 and Glu135 each act as charge relay system in the active site. The tract at residues 147–396 is reductase; it reads GGWEGTRDFR…YECFGPHKVL (250 aa). Residues 150–255 enclose the FAD-binding FR-type domain; it reads EGTRDFRIVA…VAPAGDFFMA (106 aa). Residues Tyr188 and 204-207 each bind FAD; that span reads RQYS. An NADP(+)-binding site is contributed by 268–273; it reads GVGQTP. 389–392 lines the FAD pocket; that stretch reads CFGP.

It belongs to the globin family. Two-domain flavohemoproteins subfamily. In the C-terminal section; belongs to the flavoprotein pyridine nucleotide cytochrome reductase family. As to quaternary structure, monomer. It depends on FAD as a cofactor. Requires heme b as cofactor.

The protein localises to the cytoplasm. It carries out the reaction 2 nitric oxide + NADPH + 2 O2 = 2 nitrate + NADP(+) + H(+). It catalyses the reaction 2 nitric oxide + NADH + 2 O2 = 2 nitrate + NAD(+) + H(+). Is involved in NO detoxification in an aerobic process, termed nitric oxide dioxygenase (NOD) reaction that utilizes O(2) and NAD(P)H to convert NO to nitrate, which protects the bacterium from various noxious nitrogen compounds. Therefore, plays a central role in the inducible response to nitrosative stress. Functionally, in the presence of oxygen and NADH, HMP has NADH oxidase activity, which leads to the generation of superoxide and H(2)O(2), both in vitro and in vivo, and it has been suggested that HMP might act as an amplifier of superoxide stress. Under anaerobic conditions, HMP also exhibits nitric oxide reductase and FAD reductase activities. However, all these reactions are much lower than NOD activity. Its function is as follows. Various electron acceptors are also reduced by HMP in vitro, including dihydropterine, ferrisiderophores, ferric citrate, cytochrome c, nitrite, S-nitrosoglutathione, and alkylhydroperoxides. However, it is unknown if these reactions are of any biological significance in vivo. This is Flavohemoprotein (hmp) from Escherichia coli (strain K12).